The primary structure comprises 306 residues: Dioxygenase FrzG (306 aa).

Residues His-132, Asp-134, and His-216 each coordinate Fe cation.

The protein belongs to the PhyH family. Homodimer. Fe cation is required as a cofactor.

The catalysed reaction is (1S,4S)-4-[(4-methoxyphenyl)methyl]-2-methyl-2,5-diazaspiro[bicyclo[3.2.1]octane-6,1'-cyclohexan]-4'-one + 2-oxoglutarate + O2 = (2S)-3-(4-methoxyphenyl)-2-[(3S)-3-(methylamino)-8-oxo-1-azaspiro[4.5]decan-1-yl]propanal + succinate + CO2. It participates in secondary metabolite biosynthesis. Dioxygenase; part of the gene cluster that mediates the biosynthesis of the alkaloid (-)-FR901483, a potent immunosuppressant that shows efficacy in animal models and a probable inhibitor of purine nucleotide biosynthesis by targeting phosphoribosylpyrophosphate amidotransferase (PPAT). Within the pathway, FrzG cleaves the C9-N10' bond to yield a conjugated iminium. FrzG is also able to catalyze the dehydrogenation between C7 and C8 which leads to a shunt product. The biosynthesis of (-)-FR901483 starts with the condensation of two L-tyrosines to yield (S,S)-dityrosyl-piperazine. This process occurs in 3 steps with the non-canonical nonribosomal peptide synthetase FrzA catalyzing the reduction of L-tyrosine into L-tyrosinal, the spontaneous condensation of 2 L-tyrosinal units, and the subsequent reduction by the NmrA-like family domain-containing oxidoreductase FrzB. The cytochrome P450 monooxygenase FrzC then performs coupling between N10 and C1' to morph the piperazine into a 1,4-diazabicyclo[3.2.1]octane spiro-fused to a 2,5-cyclohexadienone. The dienone portion is further reduced to cyclohexanone by the flavin-dependent reductase FrzD. The methyltranserases (MTs) FrzE and FrzF are then involved in the methylation at the C10' amine and the C4 phenolic oxygen, respectively. The order of the two MTs appear to be interchangeable. Cleavage of the C9-N10' bond by the dioxygenase FrzG then leads to formation of a conjugated iminium. In addition to the oxidation of C9, an additional dehydrogenation between C7 and C8 can occur to give a likely shunt product. The next biosynthetic step is the intramolecular aldol condensation catalyzed by the newly identified aldolase FrzH to yield an aza-tricyclic product with the formation of a C9-C3' bond. The short-chain dehydrogenase/reductase FrzI then produces dephospho-(-)-FR901483 that is phosphorylated at C4'-OH into (-)-FR901483 by the phosphotransferase FrzJ. The chain is Dioxygenase FrzG from Cladobotryum sp.